Here is a 97-residue protein sequence, read N- to C-terminus: Theromacin (97 aa).

The first 22 residues, 1-22 (MELKSGLSILLCFGICIAVINA), serve as a signal peptide directing secretion. 5 cysteine pairs are disulfide-bonded: cysteine 24–cysteine 31, cysteine 46–cysteine 50, cysteine 53–cysteine 95, cysteine 61–cysteine 69, and cysteine 79–cysteine 81.

In terms of tissue distribution, coelomic liquid (at protein level). Expressed in large fat cells in contact with coelomic cavities, in intestinal epithelia and at the epidermis level.

The protein localises to the secreted. Functionally, has a bactericidal activity. Active against M.luteus. No activity toward E.coli and F.oxysporum. This chain is Theromacin, found in Theromyzon tessulatum (Duck leech).